A 1079-amino-acid polypeptide reads, in one-letter code: Alpha-mannosidase C (1079 aa).

Residues 1–22 form the signal peptide; it reads MFYKTFGFLFIYLIILISGTLS. Positions 44 and 46 each coordinate Zn(2+). N-linked (GlcNAc...) asparagine glycans are attached at residues Asn-60 and Asn-96. Asp-158 is a Zn(2+) binding site. The active-site Nucleophile is the Asp-158. N-linked (GlcNAc...) asparagine glycans are attached at residues Asn-192, Asn-222, Asn-248, and Asn-467. Residue His-475 coordinates Zn(2+). N-linked (GlcNAc...) asparagine glycosylation is found at Asn-516, Asn-527, Asn-589, Asn-760, Asn-769, Asn-848, Asn-872, Asn-912, Asn-1040, and Asn-1057.

This sequence belongs to the glycosyl hydrolase 38 family. Zn(2+) is required as a cofactor.

The protein localises to the secreted. It catalyses the reaction Hydrolysis of terminal, non-reducing alpha-D-mannose residues in alpha-D-mannosides.. This Dictyostelium discoideum (Social amoeba) protein is Alpha-mannosidase C (manC).